The chain runs to 385 residues: Probable thioesterase PNKD (385 aa).

Over residues 32 to 42 (KASQNRTRALQ) the composition is skewed to polar residues. The segment at 32 to 56 (KASQNRTRALQSHSSPECKEEPEPL) is disordered. At V121 the chain carries Phosphoserine. Residues H172, H174, D176, H177, H229, D253, and H291 each contribute to the Zn(2+) site.

The protein belongs to the metallo-beta-lactamase superfamily. Glyoxalase II family. Isoform 2 interacts with the sarcomeric proteins, MRLC2, MYOM1 and ENO3. Zn(2+) serves as cofactor. Undergoes cleavage at the N-terminus. Expressed in many discrete areas of the brain.

Its subcellular location is the cell membrane. It is found in the mitochondrion. It localises to the cytoplasm. It catalyses the reaction a thioester + H2O = a thiol + a carboxylate + H(+). Probable thioesterase that may play a role in cellular detoxification processes; it likely acts on a yet-unknown alpha-hydroxythioester substrate. In vitro, it is able to catalyze the hydrolysis of S-D-lactoyl-glutathione to form glutathione and D-lactic acid at very low rate, though this reaction is not physiologically relevant in vivo. In Mus musculus (Mouse), this protein is Probable thioesterase PNKD (Pnkd).